The chain runs to 388 residues: Succinate--CoA ligase [ADP-forming] subunit beta (388 aa).

The region spanning 9–244 (KEILRKYGVT…LDEEDPAEIE (236 aa)) is the ATP-grasp domain. ATP-binding positions include K46, 53–55 (GRG), E99, A102, and E107. Residues N199 and D213 each contribute to the Mg(2+) site. Substrate-binding positions include N264 and 321–323 (GIM).

This sequence belongs to the succinate/malate CoA ligase beta subunit family. In terms of assembly, heterotetramer of two alpha and two beta subunits. Mg(2+) serves as cofactor.

The catalysed reaction is succinate + ATP + CoA = succinyl-CoA + ADP + phosphate. It catalyses the reaction GTP + succinate + CoA = succinyl-CoA + GDP + phosphate. The protein operates within carbohydrate metabolism; tricarboxylic acid cycle; succinate from succinyl-CoA (ligase route): step 1/1. In terms of biological role, succinyl-CoA synthetase functions in the citric acid cycle (TCA), coupling the hydrolysis of succinyl-CoA to the synthesis of either ATP or GTP and thus represents the only step of substrate-level phosphorylation in the TCA. The beta subunit provides nucleotide specificity of the enzyme and binds the substrate succinate, while the binding sites for coenzyme A and phosphate are found in the alpha subunit. The sequence is that of Succinate--CoA ligase [ADP-forming] subunit beta from Herminiimonas arsenicoxydans.